A 161-amino-acid chain; its full sequence is Disulfide bond formation protein B (161 aa).

The Cytoplasmic segment spans residues 1 to 8; it reads MQANSRAY. A helical transmembrane segment spans residues 9 to 25; it reads FLLIALVSFGLVGVALY. Topologically, residues 26-43 are periplasmic; the sequence is LQFEKGYQPCPLCVMQRF. The cysteines at positions 35 and 38 are disulfide-linked. A helical transmembrane segment spans residues 44–58; sequence AFIGIGIFSLLAAVA. Residues 59 to 63 lie on the Cytoplasmic side of the membrane; that stretch reads QNTRS. The helical transmembrane segment at 64-81 threads the bilayer; it reads LWQGLGMLSGIAGIAVAV. Topologically, residues 82-136 are periplasmic; the sequence is YHVSLLLNPKASCGIDPLENWVNALPTAKALPQVFYADGLCTAPLPPVLGLSVPA. A disulfide bridge connects residues cysteine 94 and cysteine 122. Residues 137 to 155 traverse the membrane as a helical segment; it reads WSLIWLFILTLTLAVGLIR. Topologically, residues 156-161 are cytoplasmic; the sequence is REKNFR.

It belongs to the DsbB family.

Its subcellular location is the cell inner membrane. Functionally, required for disulfide bond formation in some periplasmic proteins. Acts by oxidizing the DsbA protein. This Cupriavidus necator (strain ATCC 17699 / DSM 428 / KCTC 22496 / NCIMB 10442 / H16 / Stanier 337) (Ralstonia eutropha) protein is Disulfide bond formation protein B.